A 424-amino-acid chain; its full sequence is Inhibin beta A chain (424 aa).

The first 20 residues, 1-20 (MPLLWLRGFLLASCWIIVRS), serve as a signal peptide directing secretion. Positions 21–308 (SPTPGSEGPG…EDHPHRRRRR (288 aa)) are excised as a propeptide. Asn-165 carries N-linked (GlcNAc...) asparagine glycosylation. The disordered stretch occupies residues 257–288 (KKKKKEEEGEGKKKDGGDGGAGADEDKEQSHR). The segment covering 261–273 (KEEEGEGKKKDGG) has biased composition (basic and acidic residues). Disulfide bonds link Cys-312-Cys-320, Cys-319-Cys-389, Cys-348-Cys-421, and Cys-352-Cys-423.

It belongs to the TGF-beta family. In terms of assembly, dimeric, linked by one or more disulfide bonds. Inhibin A is a dimer of alpha/INHA and beta-A/INHBA. Activin A is a homodimer of beta-A/INHBA. Activin AB is a dimer of beta-A/INHBA and beta-B/INHBB. Interacts with FST and FSTL3; these interactions prevent activin A interaction to its type II receptor. Activin A interacts with ACVR2A. Activin A interacts with BMPR2. Inhibin A interacts with ACVR1; this interaction creates a non-signaling complex (NSC) that inhibits ACVR1-mediated BMP signaling. Inhibin A interacts with ACVR2A.

Its subcellular location is the secreted. In terms of biological role, inhibins/activins are involved in regulating a number of diverse functions such as hypothalamic and pituitary hormone secretion, gonadal hormone secretion, germ cell development and maturation, erythroid differentiation, insulin secretion, nerve cell survival, embryonic axial development or bone growth, depending on their subunit composition. Activin A is a homodimer of INHBA that plays a role in several essential biological processes including embryonic development, stem cell maintenance and differentiation, haematopoiesis, cell proliferation and tissue fibrosis. Signals through type I (such as ACVR1B or ACVR1C) and type II receptors (such as ACVR2A, ACVR2B or BMPR2) which, upon ligand binding, phosphorylate SMAD2 and SMAD3 intracellular signaling mediators that form a complex with SMAD4, translocate to the nucleus and modulate gene expression. Can also activate alternative non-canonical intracellular signaling pathways including the p38 MAPK, extracellular signal-regulated kinases 1/2 (ERK1/2) and c-Jun N-terminal kinases (JNKs) to modulate cell migration and differentiation. Alternatively, promotes osteoblastic differentiation via ACVRL1-SMAD1/5/9 pathway. In addition, can engage the type I receptor ACVR1 to form an ACVR1-activin A-type II receptor non-signaling complex (NSC) that renders receptors unavailable for engagement with BMPs, hence resulting in an apparent inhibition of ACVR1-mediated BMP signaling. Functionally, inhibin A is a dimer of alpha/INHA and beta-A/INHBA that functions as a feedback regulator in the hypothalamic-pituitary-gonadal (HPG) axis. Inhibits the secretion of FSH from the anterior pituitary gland by acting on pituitary gonadotrope cells. Antagonizes activin A by binding to the proteoglycan, betaglycan, and forming a stable complex with and, thereby, sequestering type II activin receptors while excluding type I receptor. The chain is Inhibin beta A chain (INHBA) from Felis catus (Cat).